The primary structure comprises 776 residues: Protein SEY1 (776 aa).

The Cytoplasmic portion of the chain corresponds to Met-1–His-681. One can recognise a GB1/RHD3-type G domain in the interval Gly-34 to Tyr-263. Gly-44–Ser-51 is a binding site for GTP. The chain crosses the membrane as a helical span at residues Ile-682 to Ile-702. Residues Arg-703–Pro-705 are Lumenal-facing. The chain crosses the membrane as a helical span at residues Leu-706 to Leu-726. Residues Trp-727–Lys-776 lie on the Cytoplasmic side of the membrane.

The protein belongs to the TRAFAC class dynamin-like GTPase superfamily. GB1/RHD3 GTPase family. RHD3 subfamily. As to quaternary structure, interacts with RTN1 and YOP1; GTP binding is not required for these interactions.

The protein localises to the endoplasmic reticulum membrane. Cooperates with the reticulon proteins RTN1 and RTN2 and the tubule-shaping DP1 family protein YOP1 to generate and maintain the structure of the tubular endoplasmic reticulum network. Has GTPase activity, which is required for its function in ER organization. This chain is Protein SEY1, found in Saccharomyces cerevisiae (strain YJM789) (Baker's yeast).